The following is a 388-amino-acid chain: Succinate--CoA ligase [ADP-forming] subunit beta (388 aa).

An ATP-grasp domain is found at 9–244 (KDLLVSYDIA…PSQENVRDVL (236 aa)). ATP-binding positions include Lys-46, 53 to 55 (GRG), Val-102, and Glu-107. Positions 199 and 213 each coordinate Mg(2+). Substrate-binding positions include Asn-264 and 321 to 323 (GIM).

The protein belongs to the succinate/malate CoA ligase beta subunit family. In terms of assembly, heterotetramer of two alpha and two beta subunits. It depends on Mg(2+) as a cofactor.

The catalysed reaction is succinate + ATP + CoA = succinyl-CoA + ADP + phosphate. It catalyses the reaction GTP + succinate + CoA = succinyl-CoA + GDP + phosphate. The protein operates within carbohydrate metabolism; tricarboxylic acid cycle; succinate from succinyl-CoA (ligase route): step 1/1. Functionally, succinyl-CoA synthetase functions in the citric acid cycle (TCA), coupling the hydrolysis of succinyl-CoA to the synthesis of either ATP or GTP and thus represents the only step of substrate-level phosphorylation in the TCA. The beta subunit provides nucleotide specificity of the enzyme and binds the substrate succinate, while the binding sites for coenzyme A and phosphate are found in the alpha subunit. The sequence is that of Succinate--CoA ligase [ADP-forming] subunit beta from Chlamydia caviae (strain ATCC VR-813 / DSM 19441 / 03DC25 / GPIC) (Chlamydophila caviae).